We begin with the raw amino-acid sequence, 285 residues long: MIIESRIEKGKPVVGMETTVFVHGLPRKEAIELFRRAKEISREKGFQLAVIGILKGKIVAGMSEEELEAMMREGADKVGTREIPIVVAEGKNAATTVSATIFLSRRIGIEVVVTGGTGGVHPGRVDVSQDLTEMSSSRAVLVSSGIKSILDVEATFEMLETLEIPLVGFRTNEFPLFFSRKSGRRVPRIENVEEVLKIYESMKEMELEKTLMVLNPVPEEYEIPHDEIERLLEKIELEVEGKEVTPFLLKKLVEMTNGRTLKANLALLEENVKLAGEIAVKLKRS.

The active-site Proton donor is glutamate 17. Residues lysine 77 and valine 97 each coordinate substrate. Aspartate 126 provides a ligand contact to Mn(2+). Residue 128-130 coordinates substrate; it reads SQD. The Nucleophile role is filled by lysine 147.

This sequence belongs to the pseudouridine-5'-phosphate glycosidase family. In terms of assembly, homotrimer. The cofactor is Mn(2+).

It carries out the reaction D-ribose 5-phosphate + uracil = psi-UMP + H2O. In terms of biological role, catalyzes the reversible cleavage of pseudouridine 5'-phosphate (PsiMP) to ribose 5-phosphate and uracil. Functions biologically in the cleavage direction, as part of a pseudouridine degradation pathway. This is Pseudouridine-5'-phosphate glycosidase from Thermotoga maritima (strain ATCC 43589 / DSM 3109 / JCM 10099 / NBRC 100826 / MSB8).